The sequence spans 372 residues: Glycerophosphodiester phosphodiesterase GDPD6 (372 aa).

The first 21 residues, 1 to 21, serve as a signal peptide directing secretion; sequence MAFKYLLPLLLLSLLVANCAS. The segment at 32-58 is disordered; that stretch reads KHATKKPLQTSRPYNLAHRGSNGELPE. Residues 44-362 form the GP-PDE domain; that stretch reads PYNLAHRGSN…DFTGSLHNYQ (319 aa). Asn-120, Asn-239, and Asn-260 each carry an N-linked (GlcNAc...) asparagine glycan.

This sequence belongs to the glycerophosphoryl diester phosphodiesterase family. In terms of tissue distribution, expressed in flowers and siliques.

The enzyme catalyses a sn-glycero-3-phosphodiester + H2O = an alcohol + sn-glycerol 3-phosphate + H(+). This Arabidopsis thaliana (Mouse-ear cress) protein is Glycerophosphodiester phosphodiesterase GDPD6.